A 530-amino-acid polypeptide reads, in one-letter code: Bifunctional purine biosynthesis protein PurH (530 aa).

One can recognise an MGS-like domain in the interval 1–148 (MNNPRPIRRA…KNHKDVTIVV (148 aa)).

The protein belongs to the PurH family.

It carries out the reaction (6R)-10-formyltetrahydrofolate + 5-amino-1-(5-phospho-beta-D-ribosyl)imidazole-4-carboxamide = 5-formamido-1-(5-phospho-D-ribosyl)imidazole-4-carboxamide + (6S)-5,6,7,8-tetrahydrofolate. It catalyses the reaction IMP + H2O = 5-formamido-1-(5-phospho-D-ribosyl)imidazole-4-carboxamide. The protein operates within purine metabolism; IMP biosynthesis via de novo pathway; 5-formamido-1-(5-phospho-D-ribosyl)imidazole-4-carboxamide from 5-amino-1-(5-phospho-D-ribosyl)imidazole-4-carboxamide (10-formyl THF route): step 1/1. It participates in purine metabolism; IMP biosynthesis via de novo pathway; IMP from 5-formamido-1-(5-phospho-D-ribosyl)imidazole-4-carboxamide: step 1/1. The protein is Bifunctional purine biosynthesis protein PurH of Aliivibrio salmonicida (strain LFI1238) (Vibrio salmonicida (strain LFI1238)).